A 309-amino-acid polypeptide reads, in one-letter code: MALTIDKKAIQPINTLPLITRSYNLLQDYLAISKFKVVAMLVLTAWVGLALAPDVGRGMGVQFISLLGIGLLSAAAAVINHVVDSEIDSKMARTRHRPVAKGRLSKAHALSFAAIIGVAGFIMLMLWANTLTAILTLFALVGYAFVYTSFLKRATPQNIVIGGLAGAMPPLLGWVSETGQMAAAPWLLVMIIFTWTPPHFWALAIARKSDYARAKIPMLPVTHGIDFSKTCVVAYSVLLAIVCIFPYLIGMSGLIYLIGASGLNAVFIYKAIKLKLAANDDTAMDLFRFSIIHLMVLFIILFIDKWLLL.

The next 8 helical transmembrane spans lie at 35–55 (FKVV…APDV), 59–79 (MGVQ…AAVI), 107–127 (AHAL…LMLW), 131–151 (LTAI…TSFL), 159–179 (IVIG…SETG), 186–206 (WLLV…LAIA), 238–258 (LLAI…IYLI), and 289–309 (FSII…WLLL).

It belongs to the UbiA prenyltransferase family. Protoheme IX farnesyltransferase subfamily.

Its subcellular location is the cell inner membrane. It catalyses the reaction heme b + (2E,6E)-farnesyl diphosphate + H2O = Fe(II)-heme o + diphosphate. It participates in porphyrin-containing compound metabolism; heme O biosynthesis; heme O from protoheme: step 1/1. Converts heme B (protoheme IX) to heme O by substitution of the vinyl group on carbon 2 of heme B porphyrin ring with a hydroxyethyl farnesyl side group. The protein is Protoheme IX farnesyltransferase 2 of Pseudoalteromonas translucida (strain TAC 125).